The following is a 617-amino-acid chain: Dihydroxy-acid dehydratase (617 aa).

Aspartate 82 is a binding site for Mg(2+). Position 123 (cysteine 123) interacts with [2Fe-2S] cluster. Mg(2+) contacts are provided by aspartate 124 and lysine 125. Lysine 125 carries the post-translational modification N6-carboxylysine. Cysteine 197 contributes to the [2Fe-2S] cluster binding site. Glutamate 497 is a Mg(2+) binding site. The Proton acceptor role is filled by serine 523.

This sequence belongs to the IlvD/Edd family. In terms of assembly, homodimer. [2Fe-2S] cluster serves as cofactor. Requires Mg(2+) as cofactor.

It catalyses the reaction (2R)-2,3-dihydroxy-3-methylbutanoate = 3-methyl-2-oxobutanoate + H2O. The enzyme catalyses (2R,3R)-2,3-dihydroxy-3-methylpentanoate = (S)-3-methyl-2-oxopentanoate + H2O. Its pathway is amino-acid biosynthesis; L-isoleucine biosynthesis; L-isoleucine from 2-oxobutanoate: step 3/4. The protein operates within amino-acid biosynthesis; L-valine biosynthesis; L-valine from pyruvate: step 3/4. In terms of biological role, functions in the biosynthesis of branched-chain amino acids. Catalyzes the dehydration of (2R,3R)-2,3-dihydroxy-3-methylpentanoate (2,3-dihydroxy-3-methylvalerate) into 2-oxo-3-methylpentanoate (2-oxo-3-methylvalerate) and of (2R)-2,3-dihydroxy-3-methylbutanoate (2,3-dihydroxyisovalerate) into 2-oxo-3-methylbutanoate (2-oxoisovalerate), the penultimate precursor to L-isoleucine and L-valine, respectively. The chain is Dihydroxy-acid dehydratase from Streptomyces coelicolor (strain ATCC BAA-471 / A3(2) / M145).